Consider the following 347-residue polypeptide: Putative GDP-L-fucose synthase 2 (347 aa).

The tract at residues 1–20 (MPSQQRSSSGSTAKAGDADG) is disordered. NADP(+) is bound at residue 41–47 (GHRGMVG). The active-site Proton donor/acceptor is the Y168. Residues K172, 195–198 (PNNL), and H211 contribute to the NADP(+) site. Substrate is bound by residues R219, W234, R241, and E301.

The protein belongs to the NAD(P)-dependent epimerase/dehydratase family. Fucose synthase subfamily. As to quaternary structure, homodimer.

It catalyses the reaction GDP-beta-L-fucose + NADP(+) = GDP-4-dehydro-alpha-D-rhamnose + NADPH + H(+). Its pathway is nucleotide-sugar biosynthesis; GDP-L-fucose biosynthesis via de novo pathway; GDP-L-fucose from GDP-alpha-D-mannose: step 2/2. In terms of biological role, catalyzes the two-step NADP-dependent conversion of GDP-4-dehydro-6-deoxy-D-mannose to GDP-fucose, involving an epimerase and a reductase reaction. The sequence is that of Putative GDP-L-fucose synthase 2 from Oryza sativa subsp. japonica (Rice).